Reading from the N-terminus, the 532-residue chain is Telomerase Cajal body protein 1 (532 aa).

Positions 1 to 53 are disordered; that stretch reads MKTSEERLLAPDSLPPDLAPAPVPQGSPAEKNTDFEPVPPPCGGDDQPQLATD. Residues 13–25 are compositionally biased toward pro residues; the sequence is SLPPDLAPAPVPQ. A phosphoserine mark is found at S27, S61, and S83. A disordered region spans residues 80 to 122; sequence SELSPGIEEQDVSEHASLPGEETNLPELESGEATEGVSEERAE. WD repeat units follow at residues 151–190, 206–251, 256–297, 307–348, 349–389, and 395–434; these read RSEN…YSEQ, EGDT…LRAS, NHLD…RDCE, GQSG…ALLG, GHQG…HLLW, and VTTN…SDDS. Phosphothreonine is present on T474. S476 is modified (phosphoserine). A disordered region spans residues 510–532; the sequence is DPSSPVDDQDEKGQRRTEAVGMS. Residues 520–532 are compositionally biased toward basic and acidic residues; the sequence is EKGQRRTEAVGMS.

It belongs to the TCAB1 family. Component of the telomerase holoenzyme complex composed of one molecule of TERT, one molecule of WRAP53/TCAB1, two molecules of H/ACA ribonucleoprotein complex subunits DKC1, NOP10, NHP2 and GAR1, and a telomerase RNA template component (TERC). The telomerase holoenzyme complex is associated with TEP1, SMG6/EST1A and POT1. Interacts with the chaperonin-containing T-complex (TRiC) complex; which mediates the folding of WRAP53/TCAB1. Interacts with COIL. Interacts with SMN1. Interacts with RNF8. Interacts with histone H2AX. Phosphorylated at Ser-61 by ATM in response to DNA damage, promoting its interaction with histone H2AX and localization to sites of DNA double-strand breaks.

It localises to the nucleus. The protein localises to the cajal body. The protein resides in the chromosome. It is found in the telomere. RNA chaperone that plays a key role in telomere maintenance and RNA localization to Cajal bodies. Specifically recognizes and binds the Cajal body box (CAB box) present in both small Cajal body RNAs (scaRNAs) and telomerase RNA template component (TERC). Essential component of the telomerase holoenzyme complex, a ribonucleoprotein complex essential for the replication of chromosome termini that elongates telomeres in most eukaryotes. In the telomerase holoenzyme complex, required to stimulate the catalytic activity of the complex. Acts by specifically binding the CAB box of the TERC RNA and controlling the folding of the CR4/CR5 region of the TERC RNA, a critical step for telomerase activity. In addition, also controls telomerase holoenzyme complex localization to Cajal body. During S phase, required for delivery of TERC to telomeres during S phase and for telomerase activity. In addition to its role in telomere maintenance, also required for Cajal body formation, probably by mediating localization of scaRNAs to Cajal bodies. Also plays a role in DNA repair: phosphorylated by ATM in response to DNA damage and relocalizes to sites of DNA double-strand breaks to promote the repair of DNA double-strand breaks. Acts by recruiting the ubiquitin ligase RNF8 to DNA breaks and promote both homologous recombination (HR) and non-homologous end joining (NHEJ). The chain is Telomerase Cajal body protein 1 from Mus musculus (Mouse).